We begin with the raw amino-acid sequence, 101 residues long: DET1- and DDB1-associated protein 1 (101 aa).

Residues 67-101 are disordered; the sequence is NAAKKRDQDQLEIGETSAPPRKIARTDSQEMNEDT.

Belongs to the DDA1 family. In terms of assembly, component of numerous DCX (DDB1-CUL4-X-box) E3 ubiquitin-protein ligase complexes which consist of a core of DDB1, cullin-4 (CUL4A or CUL4B), DDA1 and RBX1.

It functions in the pathway protein modification; protein ubiquitination. Functions as a component of numerous distinct DCX (DDB1-CUL4-X-box) E3 ubiquitin-protein ligase complexes which mediate the ubiquitination and subsequent proteasomal degradation of target proteins. In the DCX complexes, acts as a scaffolding subunit required to stabilize the complex. The polypeptide is DET1- and DDB1-associated protein 1 (Xenopus laevis (African clawed frog)).